A 92-amino-acid polypeptide reads, in one-letter code: Small ribosomal subunit protein uS19c (92 aa).

It belongs to the universal ribosomal protein uS19 family.

It is found in the plastid. The protein localises to the chloroplast. Functionally, protein S19 forms a complex with S13 that binds strongly to the 16S ribosomal RNA. In Cicer arietinum (Chickpea), this protein is Small ribosomal subunit protein uS19c.